Here is a 128-residue protein sequence, read N- to C-terminus: Large ribosomal subunit protein bL12 (128 aa).

In terms of assembly, homodimer. Part of the 50S ribosomal subunit; present in 6 copies per ribosome. Forms part of the ribosomal stalk which helps the ribosome interact with GTP-bound translation factors. Forms a heptameric L10(L12)2(L12)2(L12)2 complex, where L10 forms an elongated spine to which 3 L12 dimers bind in a sequential fashion.

Forms part of the ribosomal stalk which helps the ribosome interact with GTP-bound translation factors. Is thus essential for accurate translation. The polypeptide is Large ribosomal subunit protein bL12 (Thermotoga maritima (strain ATCC 43589 / DSM 3109 / JCM 10099 / NBRC 100826 / MSB8)).